A 412-amino-acid chain; its full sequence is Subtilisin-like protease 6 (412 aa).

The first 20 residues, 1–20, serve as a signal peptide directing secretion; sequence MGFITKAIPIVLAALSTVNG. A propeptide spanning residues 21 to 127 is cleaved from the precursor; that stretch reads ARILEAGPHA…VRATTNGTNL (107 aa). Residues 36 to 120 enclose the Inhibitor I9 domain; sequence KYIVVMKKDV…FIEPDFVVRA (85 aa). N-linked (GlcNAc...) asparagine glycosylation is found at Asn-123 and Asn-126. One can recognise a Peptidase S8 domain in the interval 135 to 412; it reads SWGLARVSTR…SKLIYNGSGK (278 aa). Residues Asp-167 and His-198 each act as charge relay system in the active site. Asn-252, Asn-264, and Asn-325 each carry an N-linked (GlcNAc...) asparagine glycan. The Charge relay system role is filled by Ser-358. Asn-408 carries an N-linked (GlcNAc...) asparagine glycan.

Belongs to the peptidase S8 family.

The protein resides in the secreted. In terms of biological role, secreted subtilisin-like serine protease with keratinolytic activity that contributes to pathogenicity. This Trichophyton verrucosum (Cattle ringworm fungus) protein is Subtilisin-like protease 6 (SUB6).